The following is a 153-amino-acid chain: uncharacterized protein (153 aa).

The N-terminal stretch at 1–25 (MKKRQYLKSLYVALLGTLCYLSVNA) is a signal peptide.

This is an uncharacterized protein from Pasteurella multocida (strain Pm70).